The chain runs to 2399 residues: Norsolorinic acid synthase (2399 aa).

A starter unit:ACP transacylase (SAT) domain region spans residues 10–247 (LVFGDQTYDF…RQIPIYVPAH (238 aa)). The region spanning 372–805 (KSKLAIVSMS…GGNTALLIED (434 aa)) is the Ketosynthase family 3 (KS3) domain. Active-site for beta-ketoacyl synthase activity residues include C544, H679, and H722. Residues 905–1192 (FAFTGQGSQY…LCGMIKNILG (288 aa)) form a malonyl-CoA:ACP transacylase (MAT) domain region. The For acyl/malonyl transferase activity role is filled by S995. Positions 1307–1327 (VQEAPAAKTETKKMSKLDPTK) are disordered. Residues 1315 to 1327 (TETKKMSKLDPTK) show a composition bias toward basic and acidic residues. Positions 1340-1483 (HKVIEEKTEP…CTVRFTTDSQ (144 aa)) are N-terminal hotdog fold. The PKS/mFAS DH domain maps to 1340–1658 (HKVIEEKTEP…LRSVPRKALR (319 aa)). The interval 1353-1658 (QFTVETDISR…LRSVPRKALR (306 aa)) is product template (PT) domain. Residue H1372 is the Proton acceptor; for dehydratase activity of the active site. The tract at residues 1510-1658 (LTHYNTKSGY…LRSVPRKALR (149 aa)) is C-terminal hotdog fold. Catalysis depends on D1570, which acts as the Proton donor; for dehydratase activity. The interval 1665–1734 (MDKGIRQRGG…AALKASVPKA (70 aa)) is disordered. A compositionally biased stretch (low complexity) spans 1677–1698 (GAAKGAVAAPAPAKKMVEPVKA). Over residues 1708-1723 (AAPPSPSKAAPPPAPK) the composition is skewed to pro residues. Low complexity predominate over residues 1724–1734 (PAALKASVPKA). 3 Carrier domains span residues 1733–1812 (KADP…AGAA), 1877–1953 (SKVF…GGSG), and 2020–2099 (VART…TGSS). S1770, S1911, and S2057 each carry O-(pantetheine 4'-phosphoryl)serine. Positions 2098 to 2115 (SSADSDSSSVASNPADPA) are enriched in low complexity. The tract at residues 2098-2149 (SSADSDSSSVASNPADPAATPPRSESSDTEPDDEAPSKPKSGPGSTDSCRST) is disordered. The span at 2140-2149 (PGSTDSCRST) shows a compositional bias: polar residues. A thioesterase/Claisen cyclase (TE/CLC) domain region spans residues 2164–2393 (TLFLLPDGGG…KARVNYVSDL (230 aa)). Catalysis depends on S2234, which acts as the For thioesterase activity.

Requires pantetheine 4'-phosphate as cofactor.

It carries out the reaction hexanoyl-[ACP] + 7 malonyl-CoA + 6 H(+) = noranthrone + holo-[ACP] + 7 CO2 + 7 CoA + 2 H2O. It participates in mycotoxin biosynthesis. In terms of biological role, polyketide synthase; part of the fragmented gene cluster that mediates the biosynthesis of dothistromin (DOTH), a polyketide toxin very similar in structure to the aflatoxin precursor, versicolorin B. The first step of the pathway is the conversion of acetate to norsolorinic acid (NOR) and requires the fatty acid synthase subunits hexA and hexB, as well as the polyketide synthase pksA. PksA combines a hexanoyl starter unit and 7 malonyl-CoA extender units to synthesize the precursor NOR. The hexanoyl starter unit is provided to the acyl-carrier protein (ACP) domain by the fungal fatty acid synthase hexA/hexB. The second step is the conversion of NOR to averantin (AVN) and requires the norsolorinic acid ketoreductase nor1, which catalyzes the dehydration of norsolorinic acid to form (1'S)-averantin. The cytochrome P450 monooxygenase avnA then catalyzes the hydroxylation of AVN to 5'hydroxyaverantin (HAVN). The next step is performed by adhA that transforms HAVN to averufin (AVF). Averufin might then be converted to hydroxyversicolorone by cypX and avfA. Hydroxyversicolorone is further converted versiconal hemiacetal acetate (VHA) by moxY. VHA is then the substrate for the versiconal hemiacetal acetate esterase est1 to yield versiconal (VAL). Versicolorin B synthase vbsA then converts VAL to versicolorin B (VERB) by closing the bisfuran ring. Then, the activity of the versicolorin B desaturase verB leads to versicolorin A (VERA). DotB, a predicted chloroperoxidase, may perform epoxidation of the A-ring of VERA. Alternatively, a cytochrome P450, such as cypX or avnA could catalyze this step. It is also possible that another, uncharacterized, cytochrome P450 enzyme is responsible for this step. Opening of the epoxide could potentially be achieved by the epoxide hydrolase epoA. However, epoA seems not to be required for DOTH biosynthesis, but other epoxide hydrolases may have the ability to complement this hydrolysis. Alternatively, opening of the epoxide ring could be achieved non-enzymatically. The next step is the deoxygenation of ring A to yield the 5,8-dihydroxyanthraquinone which is most likely catalyzed by the NADPH dehydrogenase encoded by ver1. The last stages of DOTH biosynthesis are proposed to involve hydroxylation of the bisfuran. OrdB and norB might have oxidative roles here. An alternative possibility is that cytochrome P450 monoogenases such as avnA and cypX might perform these steps in addition to previously proposed steps. This is Norsolorinic acid synthase from Dothistroma septosporum (Red band needle blight fungus).